The primary structure comprises 305 residues: UDP-3-O-acyl-N-acetylglucosamine deacetylase (305 aa).

Positions 79, 238, and 242 each coordinate Zn(2+). The active-site Proton donor is the His265.

Belongs to the LpxC family. Zn(2+) serves as cofactor.

The catalysed reaction is a UDP-3-O-[(3R)-3-hydroxyacyl]-N-acetyl-alpha-D-glucosamine + H2O = a UDP-3-O-[(3R)-3-hydroxyacyl]-alpha-D-glucosamine + acetate. Its pathway is glycolipid biosynthesis; lipid IV(A) biosynthesis; lipid IV(A) from (3R)-3-hydroxytetradecanoyl-[acyl-carrier-protein] and UDP-N-acetyl-alpha-D-glucosamine: step 2/6. Catalyzes the hydrolysis of UDP-3-O-myristoyl-N-acetylglucosamine to form UDP-3-O-myristoylglucosamine and acetate, the committed step in lipid A biosynthesis. The polypeptide is UDP-3-O-acyl-N-acetylglucosamine deacetylase (Aliivibrio fischeri (strain ATCC 700601 / ES114) (Vibrio fischeri)).